The following is a 182-amino-acid chain: uncharacterized protein (182 aa).

Positions 1–170 (MIVKIIKGDI…IFVNIFEREL (170 aa)) constitute a Macro domain.

This is an uncharacterized protein from Sulfurisphaera tokodaii (strain DSM 16993 / JCM 10545 / NBRC 100140 / 7) (Sulfolobus tokodaii).